The primary structure comprises 255 residues: (R)-S-adenosyl-L-methionine hydrolase (255 aa).

Adenosine-binding residues include D9, D70, and N186. (R)-S-adenosyl-L-methionine is bound by residues N186, S227, E232, and V235. V235 is an adenosine binding site.

Belongs to the SAM hydrolase / SAM-dependent halogenase family. In terms of assembly, homotrimer.

The catalysed reaction is (R)-S-adenosyl-L-methionine + H2O = adenosine + L-methionine + H(+). Catalyzes the hydrolysis of S-adenosyl-L-methionine (SAM) into adenosine and L-methionine. Does not have chlorinase or fluorinase activity. The chain is (R)-S-adenosyl-L-methionine hydrolase from Thermus thermophilus (strain ATCC 27634 / DSM 579 / HB8).